Here is a 78-residue protein sequence, read N- to C-terminus: Translation initiation factor IF-1, chloroplastic (78 aa).

The S1-like domain maps to 1–73 (MASNRELIEM…TKGRIIYRLR (73 aa)).

It belongs to the IF-1 family. Component of the 30S ribosomal translation pre-initiation complex which assembles on the 30S ribosome in the order IF-2 and IF-3, IF-1 and N-formylmethionyl-tRNA(fMet); mRNA recruitment can occur at any time during PIC assembly.

It is found in the plastid. It localises to the chloroplast. Its function is as follows. One of the essential components for the initiation of protein synthesis. Stabilizes the binding of IF-2 and IF-3 on the 30S subunit to which N-formylmethionyl-tRNA(fMet) subsequently binds. Helps modulate mRNA selection, yielding the 30S pre-initiation complex (PIC). Upon addition of the 50S ribosomal subunit IF-1, IF-2 and IF-3 are released leaving the mature 70S translation initiation complex. The polypeptide is Translation initiation factor IF-1, chloroplastic (Ostreococcus tauri).